A 274-amino-acid chain; its full sequence is 3-methyl-2-oxobutanoate hydroxymethyltransferase (274 aa).

Residues aspartate 49 and aspartate 88 each coordinate Mg(2+). Residues 49–50 (DS), aspartate 88, and lysine 118 contribute to the 3-methyl-2-oxobutanoate site. Position 120 (glutamate 120) interacts with Mg(2+). Glutamate 187 (proton acceptor) is an active-site residue.

It belongs to the PanB family. Homodecamer; pentamer of dimers. Mg(2+) serves as cofactor.

The protein resides in the cytoplasm. The enzyme catalyses 3-methyl-2-oxobutanoate + (6R)-5,10-methylene-5,6,7,8-tetrahydrofolate + H2O = 2-dehydropantoate + (6S)-5,6,7,8-tetrahydrofolate. It participates in cofactor biosynthesis; (R)-pantothenate biosynthesis; (R)-pantoate from 3-methyl-2-oxobutanoate: step 1/2. Catalyzes the reversible reaction in which hydroxymethyl group from 5,10-methylenetetrahydrofolate is transferred onto alpha-ketoisovalerate to form ketopantoate. The polypeptide is 3-methyl-2-oxobutanoate hydroxymethyltransferase (Allorhizobium ampelinum (strain ATCC BAA-846 / DSM 112012 / S4) (Agrobacterium vitis (strain S4))).